The following is a 350-amino-acid chain: Protein RecA (350 aa).

65–72 (GPESSGKT) contributes to the ATP binding site.

It belongs to the RecA family.

The protein localises to the cytoplasm. Its function is as follows. Can catalyze the hydrolysis of ATP in the presence of single-stranded DNA, the ATP-dependent uptake of single-stranded DNA by duplex DNA, and the ATP-dependent hybridization of homologous single-stranded DNAs. It interacts with LexA causing its activation and leading to its autocatalytic cleavage. The polypeptide is Protein RecA (Clostridium tetani (strain Massachusetts / E88)).